The following is a 505-amino-acid chain: 2,3-bisphosphoglycerate-independent phosphoglycerate mutase (505 aa).

Mn(2+) contacts are provided by Asp-13 and Ser-63. Residue Ser-63 is the Phosphoserine intermediate of the active site. Residues His-124, 153–154 (RD), Arg-183, Arg-189, 254–257 (RADR), and Lys-330 each bind substrate. Positions 396, 400, 437, 438, and 456 each coordinate Mn(2+).

Belongs to the BPG-independent phosphoglycerate mutase family. As to quaternary structure, monomer. Mn(2+) is required as a cofactor.

It catalyses the reaction (2R)-2-phosphoglycerate = (2R)-3-phosphoglycerate. It functions in the pathway carbohydrate degradation; glycolysis; pyruvate from D-glyceraldehyde 3-phosphate: step 3/5. In terms of biological role, catalyzes the interconversion of 2-phosphoglycerate and 3-phosphoglycerate. The sequence is that of 2,3-bisphosphoglycerate-independent phosphoglycerate mutase from Dinoroseobacter shibae (strain DSM 16493 / NCIMB 14021 / DFL 12).